Here is a 143-residue protein sequence, read N- to C-terminus: D-aminoacyl-tRNA deacylase (143 aa).

A Gly-cisPro motif, important for rejection of L-amino acids motif is present at residues 135 to 136 (GP).

Belongs to the DTD family. In terms of assembly, homodimer.

It localises to the cytoplasm. The enzyme catalyses glycyl-tRNA(Ala) + H2O = tRNA(Ala) + glycine + H(+). It catalyses the reaction a D-aminoacyl-tRNA + H2O = a tRNA + a D-alpha-amino acid + H(+). Functionally, an aminoacyl-tRNA editing enzyme that deacylates mischarged D-aminoacyl-tRNAs. Also deacylates mischarged glycyl-tRNA(Ala), protecting cells against glycine mischarging by AlaRS. Acts via tRNA-based rather than protein-based catalysis; rejects L-amino acids rather than detecting D-amino acids in the active site. By recycling D-aminoacyl-tRNA to D-amino acids and free tRNA molecules, this enzyme counteracts the toxicity associated with the formation of D-aminoacyl-tRNA entities in vivo and helps enforce protein L-homochirality. This Mycobacterium avium (strain 104) protein is D-aminoacyl-tRNA deacylase.